Reading from the N-terminus, the 302-residue chain is MPSVKETLTLLLSQAFLATGSPVDGETVVKRQCPAIHVFGARETTVSQGYGSSATVVNLVIQAHPGTTSEAIVYPACGGQASCGGISYANSVVNGTNAAAAAINNFHNSCPDTQLVLVGYSQGAQIFDNALCGGGDPGEGITNTAVPLTAGAVSAVKAAIFMGDPRNIHGLPYNVGTCTTQGFDARPAGFVCPSASKIKSYCDAADPYCCTGNDPNVHQGYGQEYGQQALAFINSQLSSGGSQPPGGGPTSTSRPTSTRTGSSPGPTQTHWGQCGGQGWTGPTQCESGTTCQVISQWYSQCL.

Positions 1 to 20 (MPSVKETLTLLLSQAFLATG) are cleaved as a signal peptide. Residues 21–31 (SPVDGETVVKR) constitute a propeptide that is removed on maturation. Residue Q32 is modified to Pyrrolidone carboxylic acid. An N-linked (GlcNAc...) asparagine glycan is attached at N94. The active site involves S121. A disordered region spans residues 236–273 (QLSSGGSQPPGGGPTSTSRPTSTRTGSSPGPTQTHWGQ). The interval 244–266 (PPGGGPTSTSRPTSTRTGSSPGP) is linker. Low complexity predominate over residues 250-269 (TSTSRPTSTRTGSSPGPTQT). A CBM1 domain is found at 266–302 (PTQTHWGQCGGQGWTGPTQCESGTTCQVISQWYSQCL). 2 disulfides stabilise this stretch: C274-C291 and C285-C301.

This sequence belongs to the cutinase family. Acetylxylan esterase subfamily. Monomer. Post-translationally, glycosylated.

Its subcellular location is the secreted. The catalysed reaction is Deacetylation of xylans and xylo-oligosaccharides.. Its pathway is glycan degradation; xylan degradation. Inhibited by phenylmethylsulfonyl flouride. Degrades acetylated xylans by cleaving acetyl side groups from the hetero-xylan backbone. The protein is Acetylxylan esterase (axe1) of Hypocrea jecorina (Trichoderma reesei).